Reading from the N-terminus, the 145-residue chain is Lysozyme-like protein 4 (145 aa).

Positions 1-19 (MQLYLVLLLISYLLTPIGA) are cleaved as a signal peptide. The C-type lysozyme domain maps to 20-145 (SILGRCVVAK…LDRWLDGCEL (126 aa)). 4 cysteine pairs are disulfide-bonded: Cys-25/Cys-143, Cys-49/Cys-130, Cys-84/Cys-95, and Cys-91/Cys-109. The active site involves Glu-54.

Belongs to the glycosyl hydrolase 22 family. Monomer. As to expression, expressed in the brain, lung, ovary, uterus and testis. In testis expressed in the germinal epithelium and on the maturing spermatozoa (at protein level).

It is found in the secreted. Its subcellular location is the cytoplasmic vesicle. The protein localises to the secretory vesicle. The protein resides in the acrosome. It localises to the cell projection. It is found in the cilium. Its subcellular location is the flagellum. Its function is as follows. May be involved in fertilization. Has no detectable bacteriolytic and lysozyme activities in vitro. This chain is Lysozyme-like protein 4 (Lyzl4), found in Rattus norvegicus (Rat).